Consider the following 159-residue polypeptide: MAPKGSERTVKKVVAENRKARFNYEIVDTYEAGLVLTGTEVKSLREGKANIAESYATDEGGEIWLINSYLPEYLQANRFNHETRRRRKLLLSKREVNRLQGAVNREGMSLIPLRIYFNERGRVKLELALGKGKKLHDKRETSKERDWNRQKNRLLKERG.

Residues 134–159 (KLHDKRETSKERDWNRQKNRLLKERG) form a disordered region. Positions 137 to 159 (DKRETSKERDWNRQKNRLLKERG) are enriched in basic and acidic residues.

The protein belongs to the SmpB family.

It localises to the cytoplasm. In terms of biological role, required for rescue of stalled ribosomes mediated by trans-translation. Binds to transfer-messenger RNA (tmRNA), required for stable association of tmRNA with ribosomes. tmRNA and SmpB together mimic tRNA shape, replacing the anticodon stem-loop with SmpB. tmRNA is encoded by the ssrA gene; the 2 termini fold to resemble tRNA(Ala) and it encodes a 'tag peptide', a short internal open reading frame. During trans-translation Ala-aminoacylated tmRNA acts like a tRNA, entering the A-site of stalled ribosomes, displacing the stalled mRNA. The ribosome then switches to translate the ORF on the tmRNA; the nascent peptide is terminated with the 'tag peptide' encoded by the tmRNA and targeted for degradation. The ribosome is freed to recommence translation, which seems to be the essential function of trans-translation. In Rhizobium meliloti (strain 1021) (Ensifer meliloti), this protein is SsrA-binding protein.